Here is an 85-residue protein sequence, read N- to C-terminus: MAHKKAGGSTNNGRDSESKRLGVKRFGGESVLAGNIIVRQRGTKFHAGTNVGLGKDHTLFALTDGKVKFEVKGPKNRKFVTIEAA.

Residues 1–22 form a disordered region; sequence MAHKKAGGSTNNGRDSESKRLG.

Belongs to the bacterial ribosomal protein bL27 family.

The protein is Large ribosomal subunit protein bL27 of Photobacterium profundum (strain SS9).